We begin with the raw amino-acid sequence, 293 residues long: Elongation factor Ts (293 aa).

Positions 79–82 (TDFV) are involved in Mg(2+) ion dislocation from EF-Tu.

It belongs to the EF-Ts family.

It is found in the cytoplasm. Functionally, associates with the EF-Tu.GDP complex and induces the exchange of GDP to GTP. It remains bound to the aminoacyl-tRNA.EF-Tu.GTP complex up to the GTP hydrolysis stage on the ribosome. This chain is Elongation factor Ts, found in Exiguobacterium sibiricum (strain DSM 17290 / CCUG 55495 / CIP 109462 / JCM 13490 / 255-15).